The following is a 335-amino-acid chain: Mitochondrial uncoupling protein 4C (335 aa).

3 Solcar repeats span residues 34–125, 137–229, and 238–329; these read RNLF…FRRP, LKIY…SKRT, and EGLP…LRQW. 6 helical membrane-spanning segments follow: residues 40-57, 100-118, 138-157, 204-223, 244-264, and 304-323; these read YVNTFIGANLAESCVFPL, GFSAMVTRNFIFNSLRVVL, KIYMALGCSFTAGCIAQALA, GVGPSCMRACLMTTGDVGSY, FVSSMCAGLTASVLSTPADVI, and GLMPTWFRLGPFSVLFWLSV.

This sequence belongs to the mitochondrial carrier (TC 2.A.29) family.

The protein resides in the mitochondrion inner membrane. Its function is as follows. Mitochondrial protein that is likely to be responsible for thermogenic respiration. Likely to function in mitochondrial uncoupling i.e. creating mitochondrial proton leaks across the inner mitochondrial membrane and can therefore dissipate the mitochondrial proton gradient and convert the energy of substrate oxidation into heat instead of ATP. Involved in cold tolerance, it is required for development to the adult stage at low temperatures. The sequence is that of Mitochondrial uncoupling protein 4C from Drosophila melanogaster (Fruit fly).